The sequence spans 499 residues: Lysine--tRNA ligase (499 aa).

Residues E408 and E415 each contribute to the Mg(2+) site.

The protein belongs to the class-II aminoacyl-tRNA synthetase family. Homodimer. Requires Mg(2+) as cofactor.

It localises to the cytoplasm. The catalysed reaction is tRNA(Lys) + L-lysine + ATP = L-lysyl-tRNA(Lys) + AMP + diphosphate. The chain is Lysine--tRNA ligase from Thermoanaerobacter sp. (strain X514).